The following is a 533-amino-acid chain: Monogalactosyldiacylglycerol synthase 1, chloroplastic (533 aa).

Residues H155 and P189 each coordinate a 1,2-diacyl-sn-glycero-3-phospho-(1'-sn-glycerol). H155 contacts UDP. Positions 192 to 215 (QLPRSYNFLVKHGTLWKMTYYGTS) are required for binding to diacyl glycerol. UDP contacts are provided by residues R324, F413, I414, 434-438 (GTIAE), and E456.

This sequence belongs to the glycosyltransferase 28 family. As to quaternary structure, homodimer. As to expression, expressed in roots, stems, leaves, flowers, siliques and seeds.

Its subcellular location is the plastid. The protein resides in the chloroplast inner membrane. It carries out the reaction a 1,2-diacyl-sn-glycerol + UDP-alpha-D-galactose = a 1,2-diacyl-3-O-(beta-D-galactosyl)-sn-glycerol + UDP + H(+). It catalyses the reaction 1,2-di-(9Z,12Z-octadecadienoyl)-sn-glycerol + UDP-alpha-D-galactose = 1,2-di-(9Z,12Z-octadecadienoyl)-3-beta-D-galactosyl-sn-glycerol + UDP + H(+). The catalysed reaction is 1-(9Z-octadecenoyl)-2-hexadecanoyl-sn-glycerol + UDP-alpha-D-galactose = 1-(9Z-octadecenoyl)-2-hexadecanoyl-3-beta-D-galactosyl-sn-glycerol + UDP + H(+). The enzyme catalyses 1,2-di-(9Z-octadecenoyl)-sn-glycerol + UDP-alpha-D-galactose = 1,2-di-(9Z-octadecenoyl)-3-beta-D-galactosyl-sn-glycerol + UDP + H(+). Activated by phosphatidate (PA) and phosphatidylglycerol (PG). Inhibited by galvestine-1. In terms of biological role, involved in the synthesis of the major structural component of photosynthetic membranes. Required for proper thylakoid membrane biogenesis. Does not discriminate between prokaryotic (18:1/16:0) or eukaryotic (18:2/18:2) 1,2-diacylglycerol species, but operates with some preference for the prokaryotic one. Is responsible for most galactolipid synthesis in chloroplasts. Required for the formation of thylakoid membranes and functional photosynthetic electron transport during cotyledons greening in young seedlings. May link galactolipid synthesis with the coordinated transcriptional regulation of chloroplasts and other organelles during cotyledon greening. This chain is Monogalactosyldiacylglycerol synthase 1, chloroplastic, found in Arabidopsis thaliana (Mouse-ear cress).